A 248-amino-acid chain; its full sequence is Large ribosomal subunit protein bL9m (248 aa).

The transit peptide at 1–25 (MLKNIYVTPLNLLKSATSLQQQVRT) directs the protein to the mitochondrion.

Belongs to the bacterial ribosomal protein bL9 family. As to quaternary structure, component of the mitochondrial ribosome large subunit (39S) which comprises a 16S rRNA and about 50 distinct proteins.

The protein localises to the mitochondrion. The chain is Large ribosomal subunit protein bL9m (mRpL9) from Drosophila melanogaster (Fruit fly).